A 257-amino-acid chain; its full sequence is Putative transcription factor R430 (257 aa).

Disordered stretches follow at residues 1 to 35 (MEKF…DNNS) and 58 to 77 (SLKS…PNKS). A compositionally biased stretch (low complexity) spans 7–25 (TDNTTDNTTDNTTDNTTDN). Over residues 26–35 (TTDKLTDNNS) the composition is skewed to basic and acidic residues.

It belongs to the nucleo-cytoplasmic large DNA viruses (NCLDVs) VLTF-3 family.

Putative transcription factor. This is Putative transcription factor R430 from Acanthamoeba polyphaga (Amoeba).